A 66-amino-acid polypeptide reads, in one-letter code: Large ribosomal subunit protein uL29 (66 aa).

The protein belongs to the universal ribosomal protein uL29 family.

This is Large ribosomal subunit protein uL29 from Thermotoga neapolitana (strain ATCC 49049 / DSM 4359 / NBRC 107923 / NS-E).